A 118-amino-acid chain; its full sequence is Small ribosomal subunit protein mS41 (118 aa).

The N-terminal 24 residues, 1-24 (MLRVVAKAQYPAAVRCFSTSHAAF), are a transit peptide targeting the mitochondrion.

It belongs to the mitochondrion-specific ribosomal protein mS41 family.

It localises to the mitochondrion. Its function is as follows. Involved in telomere length regulation. In Yarrowia lipolytica (strain CLIB 122 / E 150) (Yeast), this protein is Small ribosomal subunit protein mS41 (FYV4).